We begin with the raw amino-acid sequence, 82 residues long: Putative membrane protein insertion efficiency factor (82 aa).

This sequence belongs to the UPF0161 family.

The protein localises to the cell inner membrane. In terms of biological role, could be involved in insertion of integral membrane proteins into the membrane. The polypeptide is Putative membrane protein insertion efficiency factor (Rickettsia africae (strain ESF-5)).